The chain runs to 660 residues: DNA mismatch repair protein MutL (660 aa).

This sequence belongs to the DNA mismatch repair MutL/HexB family.

Its function is as follows. This protein is involved in the repair of mismatches in DNA. It is required for dam-dependent methyl-directed DNA mismatch repair. May act as a 'molecular matchmaker', a protein that promotes the formation of a stable complex between two or more DNA-binding proteins in an ATP-dependent manner without itself being part of a final effector complex. The chain is DNA mismatch repair protein MutL from Streptococcus equi subsp. zooepidemicus (strain MGCS10565).